An 82-amino-acid chain; its full sequence is uncharacterized protein (82 aa).

This is an uncharacterized protein from Methanocaldococcus jannaschii (strain ATCC 43067 / DSM 2661 / JAL-1 / JCM 10045 / NBRC 100440) (Methanococcus jannaschii).